The chain runs to 122 residues: Holo-[acyl-carrier-protein] synthase (122 aa).

Positions 8 and 57 each coordinate Mg(2+).

The protein belongs to the P-Pant transferase superfamily. AcpS family. The cofactor is Mg(2+).

The protein localises to the cytoplasm. It catalyses the reaction apo-[ACP] + CoA = holo-[ACP] + adenosine 3',5'-bisphosphate + H(+). Its function is as follows. Transfers the 4'-phosphopantetheine moiety from coenzyme A to a Ser of acyl-carrier-protein. The polypeptide is Holo-[acyl-carrier-protein] synthase (Exiguobacterium sp. (strain ATCC BAA-1283 / AT1b)).